The chain runs to 688 residues: Pescadillo homolog (688 aa).

In terms of domain architecture, BRCT spans 351 to 470 (EVASLFASFT…KLLRHDLYAP (120 aa)). 2 disordered regions span residues 411–442 (RPPLPESALPPLPQNPGEGAEKAPRVRPGTRM) and 496–688 (AEQE…TKGR). Pro residues predominate over residues 412–424 (PPLPESALPPLPQ). A coiled-coil region spans residues 496 to 536 (AEQESDGEAERQAEEENEEEESEVEGLSMDKEMVETENSEA). Acidic residues-rich tracts occupy residues 510-519 (EENEEEESEV), 530-544 (ETENSEAGESDEESV), 554-565 (GSDDEEEESEED), and 576-589 (EAADVQSESEDDEE). A compositionally biased stretch (basic residues) spans 619-634 (KKSKKQKPLAKKHAAQ). Residues 627 to 686 (LAKKHAAQKKKEQEELERQKMMMSRKKRKLLDKMLYSNKKKDEEAEKLRRKRRKIEQGTK) are a coiled coil. Residues 635 to 646 (KKKEQEELERQK) are compositionally biased toward basic and acidic residues.

Belongs to the pescadillo family. In terms of assembly, component of the NOP7 complex, composed of ERB1, NOP7 and YTM1. The complex is held together by ERB1, which interacts with NOP7 via its N-terminal domain and with YTM1 via a high-affinity interaction between the seven-bladed beta-propeller domains of the 2 proteins. The NOP7 complex associates with the 66S pre-ribosome.

Its subcellular location is the nucleus. The protein resides in the nucleolus. It is found in the nucleoplasm. Functionally, component of the NOP7 complex, which is required for maturation of the 25S and 5.8S ribosomal RNAs and formation of the 60S ribosome. This chain is Pescadillo homolog, found in Coccidioides immitis (strain RS) (Valley fever fungus).